We begin with the raw amino-acid sequence, 129 residues long: Lysozyme C (129 aa).

In terms of domain architecture, C-type lysozyme spans 1-129 (KVYGRCELAA…VSVWTRGCRL (129 aa)). Cystine bridges form between cysteine 6–cysteine 127, cysteine 30–cysteine 115, cysteine 64–cysteine 80, and cysteine 76–cysteine 94. Residues glutamate 35 and aspartate 52 contribute to the active site.

The protein belongs to the glycosyl hydrolase 22 family. In terms of assembly, monomer.

Its subcellular location is the secreted. It catalyses the reaction Hydrolysis of (1-&gt;4)-beta-linkages between N-acetylmuramic acid and N-acetyl-D-glucosamine residues in a peptidoglycan and between N-acetyl-D-glucosamine residues in chitodextrins.. Lysozymes have primarily a bacteriolytic function; those in tissues and body fluids are associated with the monocyte-macrophage system and enhance the activity of immunoagents. The polypeptide is Lysozyme C (LYZ) (Lophura leucomelanos (Kalij pheasant)).